Consider the following 999-residue polypeptide: Probable basic-leucine zipper transcription factor N (999 aa).

2 stretches are compositionally biased toward low complexity: residues 1–79 (MYQS…YQQQ) and 88–126 (NNVNINNNNNNNVNINSQNNVNNNNNNNNNNNNGNINNN). A disordered region spans residues 1-126 (MYQSIPQQGN…NNNNGNINNN (126 aa)). Coiled-coil stretches lie at residues 148–198 (QQQQ…MVLM) and 232–282 (GIQQ…QQIS). Positions 286-302 (ESASPYYSTPIQSNTML) are enriched in polar residues. 3 disordered regions span residues 286–406 (ESAS…SQDQ), 450–533 (QQLH…PTIN), and 601–620 (EKQKTRRRASQNLASRNYRQ). The segment covering 303–347 (SIPSSPGIPSSIPQLNNSNNINNNSNNNNNNNNNNNNNNINYNSN) has biased composition (low complexity). A compositionally biased stretch (polar residues) spans 348–406 (MASNFISQHSNNGSNTSSPVPQTTYLQNSGGNFNAYNGSNTNSPITPSSYLQPTTSQDQ). Residues 423–451 (IQQQQKILQQQQQQQLLLQQQIQQQQQQQ) adopt a coiled-coil conformation. Residues 450-517 (QQLHQPQSPQ…IIQPTTIQPQ (68 aa)) are compositionally biased toward low complexity. The bZIP domain occupies 601–664 (EKQKTRRRAS…KKLLHENNIL (64 aa)). The tract at residues 602-632 (KQKTRRRASQNLASRNYRQRKKQYVNEVEDR) is basic motif. Residues 636-643 (IVQENERL) are leucine-zipper. 3 disordered regions span residues 665-711 (KSGG…VVET), 779-807 (QSCPFEDPSEKQHSDPNSSPIGDMPSPYE), and 870-899 (VNNGGNTKSKKTAASTSTTTTTTSTSTTTT). Acidic residues predominate over residues 682-692 (SEDEDEDDFDQ). Residues 921–950 (HLVQLSGLLDKLKENIDHENETLIQTYEKL) are a coiled coil.

This sequence belongs to the bZIP family.

It localises to the nucleus. In terms of biological role, probable transcriptional regulator. The chain is Probable basic-leucine zipper transcription factor N (bzpN) from Dictyostelium discoideum (Social amoeba).